We begin with the raw amino-acid sequence, 297 residues long: Phosphoribosylaminoimidazole-succinocarboxamide synthase (297 aa).

Belongs to the SAICAR synthetase family.

It catalyses the reaction 5-amino-1-(5-phospho-D-ribosyl)imidazole-4-carboxylate + L-aspartate + ATP = (2S)-2-[5-amino-1-(5-phospho-beta-D-ribosyl)imidazole-4-carboxamido]succinate + ADP + phosphate + 2 H(+). It participates in purine metabolism; IMP biosynthesis via de novo pathway; 5-amino-1-(5-phospho-D-ribosyl)imidazole-4-carboxamide from 5-amino-1-(5-phospho-D-ribosyl)imidazole-4-carboxylate: step 1/2. The sequence is that of Phosphoribosylaminoimidazole-succinocarboxamide synthase (purC) from Mycobacterium leprae (strain TN).